Consider the following 162-residue polypeptide: D-aminoacyl-tRNA deacylase (162 aa).

The short motif at glycine 145–proline 146 is the Gly-cisPro motif, important for rejection of L-amino acids element.

It belongs to the DTD family. In terms of assembly, homodimer.

Its subcellular location is the cytoplasm. It catalyses the reaction glycyl-tRNA(Ala) + H2O = tRNA(Ala) + glycine + H(+). The enzyme catalyses a D-aminoacyl-tRNA + H2O = a tRNA + a D-alpha-amino acid + H(+). An aminoacyl-tRNA editing enzyme that deacylates mischarged D-aminoacyl-tRNAs. Also deacylates mischarged glycyl-tRNA(Ala), protecting cells against glycine mischarging by AlaRS. Acts via tRNA-based rather than protein-based catalysis; rejects L-amino acids rather than detecting D-amino acids in the active site. By recycling D-aminoacyl-tRNA to D-amino acids and free tRNA molecules, this enzyme counteracts the toxicity associated with the formation of D-aminoacyl-tRNA entities in vivo and helps enforce protein L-homochirality. The polypeptide is D-aminoacyl-tRNA deacylase (Bifidobacterium longum subsp. infantis (strain ATCC 15697 / DSM 20088 / JCM 1222 / NCTC 11817 / S12)).